A 200-amino-acid chain; its full sequence is Holliday junction branch migration complex subunit RuvA (200 aa).

Residues 1–63 (MIGKLSGKID…EEHIHLYGFL (63 aa)) form a domain I region. A domain II region spans residues 64 to 142 (TLEEKNFFNL…KIFSSSAIIK (79 aa)). The segment at 142-146 (KDSSN) is flexible linker. The interval 147–200 (ISSVEINEVIKALVNLGFTRFEAQNTVQGIITQNTKISIDELIKTALKNRNSSF) is domain III.

It belongs to the RuvA family. In terms of assembly, homotetramer. Forms an RuvA(8)-RuvB(12)-Holliday junction (HJ) complex. HJ DNA is sandwiched between 2 RuvA tetramers; dsDNA enters through RuvA and exits via RuvB. An RuvB hexamer assembles on each DNA strand where it exits the tetramer. Each RuvB hexamer is contacted by two RuvA subunits (via domain III) on 2 adjacent RuvB subunits; this complex drives branch migration. In the full resolvosome a probable DNA-RuvA(4)-RuvB(12)-RuvC(2) complex forms which resolves the HJ.

It localises to the cytoplasm. In terms of biological role, the RuvA-RuvB-RuvC complex processes Holliday junction (HJ) DNA during genetic recombination and DNA repair, while the RuvA-RuvB complex plays an important role in the rescue of blocked DNA replication forks via replication fork reversal (RFR). RuvA specifically binds to HJ cruciform DNA, conferring on it an open structure. The RuvB hexamer acts as an ATP-dependent pump, pulling dsDNA into and through the RuvAB complex. HJ branch migration allows RuvC to scan DNA until it finds its consensus sequence, where it cleaves and resolves the cruciform DNA. This chain is Holliday junction branch migration complex subunit RuvA, found in Rickettsia typhi (strain ATCC VR-144 / Wilmington).